A 217-amino-acid polypeptide reads, in one-letter code: Adenylate kinase (217 aa).

Residue 10 to 15 participates in ATP binding; the sequence is GAGKGT. An NMP region spans residues 30–59; the sequence is STGDMLRAAVKAGSPLGVKVKDIMASGQLV. AMP-binding positions include Thr-31, Arg-36, 57-59, 85-88, and Gln-92; these read QLV and GFPR. The segment at 122-159 is LID; it reads GRRVHEASGRIYHVTHNPPKTEGVDDITGEPLVQRDDD. Residues Arg-123 and 132–133 each bind ATP; that span reads IY. Positions 156 and 167 each coordinate AMP. Residue Gly-202 participates in ATP binding.

This sequence belongs to the adenylate kinase family. Monomer.

The protein resides in the cytoplasm. The catalysed reaction is AMP + ATP = 2 ADP. It functions in the pathway purine metabolism; AMP biosynthesis via salvage pathway; AMP from ADP: step 1/1. Catalyzes the reversible transfer of the terminal phosphate group between ATP and AMP. Plays an important role in cellular energy homeostasis and in adenine nucleotide metabolism. This Teredinibacter turnerae (strain ATCC 39867 / T7901) protein is Adenylate kinase.